A 230-amino-acid polypeptide reads, in one-letter code: Endonuclease NucS (230 aa).

It belongs to the NucS endonuclease family.

The protein localises to the cytoplasm. Cleaves both 3' and 5' ssDNA extremities of branched DNA structures. This is Endonuclease NucS from Corynebacterium efficiens (strain DSM 44549 / YS-314 / AJ 12310 / JCM 11189 / NBRC 100395).